We begin with the raw amino-acid sequence, 268 residues long: Phosphatidylglycerol--prolipoprotein diacylglyceryl transferase (268 aa).

7 helical membrane passes run 23–43, 62–82, 97–117, 132–152, 179–199, 206–226, and 241–261; these read IGLR…RWLA, LLFN…VFFY, VWEG…AMIW, FVAP…FINL, SQLY…NIFI, ASVA…VEYV, and GQAL…WAYS. Arginine 145 is a binding site for a 1,2-diacyl-sn-glycero-3-phospho-(1'-sn-glycerol).

Belongs to the Lgt family.

It is found in the cell inner membrane. The enzyme catalyses L-cysteinyl-[prolipoprotein] + a 1,2-diacyl-sn-glycero-3-phospho-(1'-sn-glycerol) = an S-1,2-diacyl-sn-glyceryl-L-cysteinyl-[prolipoprotein] + sn-glycerol 1-phosphate + H(+). It functions in the pathway protein modification; lipoprotein biosynthesis (diacylglyceryl transfer). In terms of biological role, catalyzes the transfer of the diacylglyceryl group from phosphatidylglycerol to the sulfhydryl group of the N-terminal cysteine of a prolipoprotein, the first step in the formation of mature lipoproteins. This Haemophilus influenzae (strain 86-028NP) protein is Phosphatidylglycerol--prolipoprotein diacylglyceryl transferase.